Consider the following 81-residue polypeptide: Exodeoxyribonuclease 7 small subunit (81 aa).

This sequence belongs to the XseB family. As to quaternary structure, heterooligomer composed of large and small subunits.

The protein resides in the cytoplasm. The catalysed reaction is Exonucleolytic cleavage in either 5'- to 3'- or 3'- to 5'-direction to yield nucleoside 5'-phosphates.. Its function is as follows. Bidirectionally degrades single-stranded DNA into large acid-insoluble oligonucleotides, which are then degraded further into small acid-soluble oligonucleotides. The protein is Exodeoxyribonuclease 7 small subunit of Pasteurella multocida (strain Pm70).